Here is a 134-residue protein sequence, read N- to C-terminus: Interleukin-5 (134 aa).

Residues 1-21 (MRMHLHLTLVALGAAYVCANA) form the signal peptide. 2 N-linked (GlcNAc...) asparagine glycosylation sites follow: Asn76 and Asn90.

This sequence belongs to the IL-5 family. Homodimer; disulfide-linked. Interacts with IL5RA. Interacts with CSF2RB.

It localises to the secreted. Functionally, homodimeric cytokine expressed predominantly by T-lymphocytes and NK cells that plays an important role in the survival, differentiation, and chemotaxis of eosinophils. Also acts on activated and resting B-cells to induce immunoglobulin production, growth, and differentiation. Mechanistically, exerts its biological effects through a receptor composed of IL5RA subunit and the cytokine receptor common subunit beta/CSF2RB. Binding to the receptor leads to activation of various kinases including LYN, SYK and JAK2 and thereby propagates signals through the RAS-MAPK and JAK-STAT5 pathways respectively. The chain is Interleukin-5 (IL5) from Bos taurus (Bovine).